A 293-amino-acid polypeptide reads, in one-letter code: Beta-lactamase (293 aa).

Positions 1-27 (MRFTATVLSRVATGLALGLSMATASLA) are cleaved as a signal peptide. Ser74 (acyl-ester intermediate) is an active-site residue. 238–240 (KSG) provides a ligand contact to substrate.

It belongs to the class-A beta-lactamase family.

Its subcellular location is the periplasm. The enzyme catalyses a beta-lactam + H2O = a substituted beta-amino acid. Functionally, hydrolyzes beta-lactams antibiotics. Rates of hydrolysis relative to benzylpenicillin =100: ampicillin = 27, carbenicillin = 25, cloxacillin = 0, cephaloridine = 4. This Rhodobacter capsulatus (Rhodopseudomonas capsulata) protein is Beta-lactamase.